The following is a 317-amino-acid chain: Tyrosine--tRNA ligase (317 aa).

Position 33 (Tyr-33) interacts with L-tyrosine. The 'HIGH' region signature appears at 38–46 (PSGKIHMGH). 4 residues coordinate L-tyrosine: Tyr-155, Gln-159, Asp-162, and Gln-177. The 'KMSKS' region motif lies at 211 to 215 (KMASS). Position 214 (Ser-214) interacts with ATP.

This sequence belongs to the class-I aminoacyl-tRNA synthetase family. TyrS type 3 subfamily. Homodimer.

The protein localises to the cytoplasm. The enzyme catalyses tRNA(Tyr) + L-tyrosine + ATP = L-tyrosyl-tRNA(Tyr) + AMP + diphosphate + H(+). Its function is as follows. Catalyzes the attachment of tyrosine to tRNA(Tyr) in a two-step reaction: tyrosine is first activated by ATP to form Tyr-AMP and then transferred to the acceptor end of tRNA(Tyr). This chain is Tyrosine--tRNA ligase, found in Methanosarcina barkeri (strain Fusaro / DSM 804).